We begin with the raw amino-acid sequence, 339 residues long: Phenylalanine--tRNA ligase alpha subunit (339 aa).

Glu-253 contributes to the Mg(2+) binding site.

Belongs to the class-II aminoacyl-tRNA synthetase family. Phe-tRNA synthetase alpha subunit type 1 subfamily. As to quaternary structure, tetramer of two alpha and two beta subunits. Requires Mg(2+) as cofactor.

The protein resides in the cytoplasm. The catalysed reaction is tRNA(Phe) + L-phenylalanine + ATP = L-phenylalanyl-tRNA(Phe) + AMP + diphosphate + H(+). In Chromohalobacter salexigens (strain ATCC BAA-138 / DSM 3043 / CIP 106854 / NCIMB 13768 / 1H11), this protein is Phenylalanine--tRNA ligase alpha subunit.